Reading from the N-terminus, the 397-residue chain is Acetate kinase (397 aa).

Position 7 (Asn7) interacts with Mg(2+). ATP is bound at residue Lys14. Arg91 contacts substrate. The active-site Proton donor/acceptor is Asp148. ATP is bound by residues 208–212 (HIGNG), 283–285 (DMR), and 331–335 (GVGEN). Position 384 (Glu384) interacts with Mg(2+).

This sequence belongs to the acetokinase family. As to quaternary structure, homodimer. Mg(2+) is required as a cofactor. Requires Mn(2+) as cofactor.

It is found in the cytoplasm. It catalyses the reaction acetate + ATP = acetyl phosphate + ADP. It functions in the pathway metabolic intermediate biosynthesis; acetyl-CoA biosynthesis; acetyl-CoA from acetate: step 1/2. Its function is as follows. Catalyzes the formation of acetyl phosphate from acetate and ATP. Can also catalyze the reverse reaction. This is Acetate kinase from Azobacteroides pseudotrichonymphae genomovar. CFP2.